Reading from the N-terminus, the 141-residue chain is uncharacterized protein (141 aa).

This sequence belongs to the mimivirus L163/R849 family.

This is an uncharacterized protein from Acanthamoeba polyphaga mimivirus (APMV).